The primary structure comprises 147 residues: Mitochondrial import receptor subunit TOM20 homolog (147 aa).

The Mitochondrial intermembrane portion of the chain corresponds to 1-3 (MVA). The helical transmembrane segment at 4–26 (VGKTSAIAAGVCGALLLGYCIYF) threads the bilayer. The Cytoplasmic portion of the chain corresponds to 27 to 147 (DRKRRSDPNF…AQNLSEDDVE (121 aa)).

Belongs to the Tom20 family. Forms part of the preprotein translocase complex of the outer mitochondrial membrane (TOM complex). Interacts with tom22.

The protein resides in the mitochondrion outer membrane. Functionally, central component of the receptor complex responsible for the recognition and translocation of cytosolically synthesized mitochondrial preproteins. Together with tom22 functions as the transit peptide receptor at the surface of the mitochondrion outer membrane and facilitates the movement of preproteins into the tom40 translocation pore. The protein is Mitochondrial import receptor subunit TOM20 homolog (tomm20) of Xenopus laevis (African clawed frog).